We begin with the raw amino-acid sequence, 236 residues long: MRLAVNVDHIATLRNARNASLPDPVTAAVIAELNGASGIVCHLREDRRHIKDRDLERLREAVTTRLDLEMAMTTEMQHIAIRTKPELITLVPEKREELTTEGGFDIIRHYDTLCRYIKPVQDAGIEVSIFIEPEEEAIERAASAGAEIVELHTGPYSLKKTPAELETELMRIRKAATFARSRGLRVVAGHGLDYFNIVPFRTIEEIEEVSIGHALIARAALVGMETAVRDMLRIIN.

Asparagine 6 contacts 3-amino-2-oxopropyl phosphate. 8–9 (DH) is a binding site for 1-deoxy-D-xylulose 5-phosphate. Arginine 17 contributes to the 3-amino-2-oxopropyl phosphate binding site. Residue histidine 42 is the Proton acceptor of the active site. Residues arginine 44 and histidine 49 each contribute to the 1-deoxy-D-xylulose 5-phosphate site. Catalysis depends on glutamate 69, which acts as the Proton acceptor. Threonine 99 is a binding site for 1-deoxy-D-xylulose 5-phosphate. Histidine 190 serves as the catalytic Proton donor. 3-amino-2-oxopropyl phosphate contacts are provided by residues glycine 191 and 212-213 (GH).

Belongs to the PNP synthase family. As to quaternary structure, homooctamer; tetramer of dimers.

It localises to the cytoplasm. The enzyme catalyses 3-amino-2-oxopropyl phosphate + 1-deoxy-D-xylulose 5-phosphate = pyridoxine 5'-phosphate + phosphate + 2 H2O + H(+). The protein operates within cofactor biosynthesis; pyridoxine 5'-phosphate biosynthesis; pyridoxine 5'-phosphate from D-erythrose 4-phosphate: step 5/5. In terms of biological role, catalyzes the complicated ring closure reaction between the two acyclic compounds 1-deoxy-D-xylulose-5-phosphate (DXP) and 3-amino-2-oxopropyl phosphate (1-amino-acetone-3-phosphate or AAP) to form pyridoxine 5'-phosphate (PNP) and inorganic phosphate. The chain is Pyridoxine 5'-phosphate synthase from Prosthecochloris aestuarii (strain DSM 271 / SK 413).